A 427-amino-acid chain; its full sequence is Endothelin-1 receptor (427 aa).

Positions 1-20 are cleaved as a signal peptide; it reads MSIFCLAAYFWLTMVGGVMA. At 21–80 the chain is on the extracellular side; it reads DNPERYSANLSSHMEDFTPFPGTEINFLGTTHRPPNLALPSNGSMHGYCPQQTKITTAFK. N-linked (GlcNAc...) asparagine glycosylation is found at asparagine 29 and asparagine 62. The helical transmembrane segment at 81–102 threads the bilayer; sequence YINTVISCTIFIVGMVGNATLL. Residues 103–112 are Cytoplasmic-facing; sequence RIIYQNKCMR. The chain crosses the membrane as a helical span at residues 113-132; sequence NGPNALIASLALGDLIYVVI. Residues 133–159 lie on the Extracellular side of the membrane; sequence DLPINVFKLLAGRWPFDHNDFGVFLCK. A disulfide bridge connects residues cysteine 158 and cysteine 239. The chain crosses the membrane as a helical span at residues 160-181; sequence LFPFLQKSSVGITVLNLCALSV. The Cytoplasmic segment spans residues 182-205; sequence DRYRAVASWSRVQGIGIPLITAIE. Residues 206–229 traverse the membrane as a helical segment; that stretch reads IVSIWILSFILAIPEAIGFVMVPF. Over 230-256 the chain is Extracellular; it reads EYKGELHRTCMLNATSKFMEFYQDVKD. The N-linked (GlcNAc...) asparagine glycan is linked to asparagine 242. Residues 257–278 form a helical membrane-spanning segment; the sequence is WWLFGFYFCMPLVCTAIFYTLM. Topologically, residues 279–306 are cytoplasmic; it reads TCEMLNRRNGSLRIALSEHLKQRREVAK. The chain crosses the membrane as a helical span at residues 307 to 328; the sequence is TVFCLVVIFALCWFPLHLSRIL. Over 329–347 the chain is Extracellular; the sequence is KKTVYDEMDKNRCELLSFL. The helical transmembrane segment at 348–372 threads the bilayer; sequence LLMDYIGINLATMNSCINPIALYFV. Over 373-427 the chain is Cytoplasmic; the sequence is SKKFKNCFQSCLCCCCHQSKSLMTSVPMNGTSIQWKNQEQNNHNTERSSHKDSMN. The segment at 408–427 is disordered; the sequence is KNQEQNNHNTERSSHKDSMN. A compositionally biased stretch (basic and acidic residues) spans 416–427; it reads NTERSSHKDSMN. Serine 425 bears the Phosphoserine mark.

The protein belongs to the G-protein coupled receptor 1 family. Endothelin receptor subfamily. EDNRA sub-subfamily. In terms of assembly, interacts with HDAC7 and KAT5.

It is found in the cell membrane. In terms of biological role, receptor for endothelin-1. Mediates its action by association with G proteins that activate a phosphatidylinositol-calcium second messenger system. The rank order of binding affinities for ET-A is: ET1 &gt; ET2 &gt;&gt; ET3. The chain is Endothelin-1 receptor from Mus musculus (Mouse).